The primary structure comprises 236 residues: MKAGNGFTFKRFHINHDRCAMKVGTDGILLGAWADLANSRSILDLGTGSGLIALMLAQRSDEDVQIHGVERDPAAARQAQENFRASPWAHRLYLHFGDIADFAQKCGQKFDNIVANPPYFAQGVDCRNHARNAARYTAALSHAQWLEIASSLLTEQGTIHFVLPAEQGKTLKQSTALYCVRQCDVISKQGKAAQRVLLSFMKEKKETAYSELTIYDEKNRYTLEFIQLTREFYLKF.

It belongs to the methyltransferase superfamily. tRNA (adenine-N(6)-)-methyltransferase family.

Its subcellular location is the cytoplasm. It catalyses the reaction adenosine(37) in tRNA1(Val) + S-adenosyl-L-methionine = N(6)-methyladenosine(37) in tRNA1(Val) + S-adenosyl-L-homocysteine + H(+). Its function is as follows. Specifically methylates the adenine in position 37 of tRNA(1)(Val) (anticodon cmo5UAC). The polypeptide is tRNA1(Val) (adenine(37)-N6)-methyltransferase (Actinobacillus succinogenes (strain ATCC 55618 / DSM 22257 / CCUG 43843 / 130Z)).